A 126-amino-acid chain; its full sequence is Anti-adapter protein IraD (126 aa).

The protein belongs to the GpW/Gp25 family. IraD subfamily. As to quaternary structure, interacts with RssB.

The protein localises to the cytoplasm. Inhibits RpoS proteolysis by regulating RssB activity, thereby increasing the stability of the sigma stress factor RpoS during oxidative stress. Its effect on RpoS stability is due to its interaction with RssB, which probably blocks the interaction of RssB with RpoS, and the consequent delivery of the RssB-RpoS complex to the ClpXP protein degradation pathway. The sequence is that of Anti-adapter protein IraD from Salmonella enteritidis PT4 (strain P125109).